The chain runs to 168 residues: Histone doublet miniH2B-H2A (168 aa).

It is found in the host nucleus. The protein localises to the host cytoplasm. The protein resides in the virion. Histone-like protein that is recruited to viral factories during viral replication and participates in viral DNA packaging and virion production probably by forming unstable nucleosome-like particles. May compact the viral DNA. In Melbournevirus (MelV), this protein is Histone doublet miniH2B-H2A.